The following is a 307-amino-acid chain: Myeloid-associated differentiation marker-like protein 2 (307 aa).

MARVEL domains are found at residues A17 to G154 and Y159 to F303. Transmembrane regions (helical) follow at residues F53 to F73, A90 to F110, L129 to T149, V163 to V183, V198 to G218, V232 to F252, and L278 to S298.

Belongs to the MAL family.

It localises to the membrane. The sequence is that of Myeloid-associated differentiation marker-like protein 2 (Myadml2) from Rattus norvegicus (Rat).